Reading from the N-terminus, the 444-residue chain is tRNA modification GTPase MnmE (444 aa).

Arg-23, Glu-82, and Lys-121 together coordinate (6S)-5-formyl-5,6,7,8-tetrahydrofolate. One can recognise a TrmE-type G domain in the interval 216–365; sequence GTSIVLAGLP…LKQALQKWLN (150 aa). Position 226 (Asn-226) interacts with K(+). GTP contacts are provided by residues 226-231, 245-251, and 270-273; these read NAGKSS, TDIPGTT, and DSAG. Position 230 (Ser-230) interacts with Mg(2+). 3 residues coordinate K(+): Thr-245, Ile-247, and Thr-250. Thr-251 lines the Mg(2+) pocket. Lys-444 lines the (6S)-5-formyl-5,6,7,8-tetrahydrofolate pocket.

It belongs to the TRAFAC class TrmE-Era-EngA-EngB-Septin-like GTPase superfamily. TrmE GTPase family. As to quaternary structure, homodimer. Heterotetramer of two MnmE and two MnmG subunits. K(+) serves as cofactor.

It is found in the cytoplasm. Its function is as follows. Exhibits a very high intrinsic GTPase hydrolysis rate. Involved in the addition of a carboxymethylaminomethyl (cmnm) group at the wobble position (U34) of certain tRNAs, forming tRNA-cmnm(5)s(2)U34. This chain is tRNA modification GTPase MnmE, found in Chlamydia trachomatis serovar A (strain ATCC VR-571B / DSM 19440 / HAR-13).